We begin with the raw amino-acid sequence, 64 residues long: Conotoxin Mr3.5 (64 aa).

An N-terminal signal peptide occupies residues 1–19 (MSKLGVLLTICLLLFPLTA). Residues 20–46 (LPLDGDQPADQRAERTQAEKHSLPDPR) constitute a propeptide that is removed on maturation. Intrachain disulfides connect cysteine 49–cysteine 58, cysteine 50–cysteine 62, and cysteine 54–cysteine 63. Cysteine amide is present on cysteine 63.

It belongs to the conotoxin M superfamily. Expressed by the venom duct.

The protein localises to the secreted. This chain is Conotoxin Mr3.5, found in Conus marmoreus (Marble cone).